Reading from the N-terminus, the 397-residue chain is Phosphoglycerate kinase (397 aa).

Substrate-binding positions include 21 to 23 (DFN), Arg-36, 59 to 62 (HCGR), Arg-118, and Arg-151. Residues Lys-201, Glu-323, and 353–356 (GGDT) each bind ATP.

This sequence belongs to the phosphoglycerate kinase family. Monomer.

The protein resides in the cytoplasm. It catalyses the reaction (2R)-3-phosphoglycerate + ATP = (2R)-3-phospho-glyceroyl phosphate + ADP. The protein operates within carbohydrate degradation; glycolysis; pyruvate from D-glyceraldehyde 3-phosphate: step 2/5. The polypeptide is Phosphoglycerate kinase (Bartonella henselae (strain ATCC 49882 / DSM 28221 / CCUG 30454 / Houston 1) (Rochalimaea henselae)).